We begin with the raw amino-acid sequence, 91 residues long: Large ribosomal subunit protein uL23c (91 aa).

It belongs to the universal ribosomal protein uL23 family. In terms of assembly, part of the 50S ribosomal subunit.

It is found in the plastid. Its subcellular location is the chloroplast. Binds to 23S rRNA. The chain is Large ribosomal subunit protein uL23c (rpl23) from Pinus koraiensis (Korean pine).